Consider the following 324-residue polypeptide: MSFTRQLSEMSASELNDAIDDTNFPQAHILSRGRNNSVCSTSSTSGTSSLADRQQNQAEEATAIAGTPVEEVAPAPALVPLAGNQRPRLILKTNGSSPDSDGTQPKTPLTPRTSTTPGHEKCTFHHDLELDHKPPTREALLPDMARSYRLLLGGLGENPDRQGLIKTPERAAKAMLYFTKGYDQSLEDVLNGAVFDEDHDEMVVVKDIEMFSMCEHHLVPFYGKVSIGYLPCNKILGLSKLARIVEIFSRRLQVQERLTKQIAVAVTQAVQPAGVAVVVEGVHMCMVMRGVQKINSKTVTSTMLGVFRDDPKTREEFLNLVNSK.

Disordered regions lie at residues G33–E59 and V79–H119. Residues S40–S49 are compositionally biased toward low complexity. 2 stretches are compositionally biased toward polar residues: residues L50 to E59 and T93 to P117. Zn(2+)-binding residues include C214, H217, and C285.

The protein belongs to the GTP cyclohydrolase I family. As to quaternary structure, toroid-shaped homodecamer, composed of two pentamers of five dimers. As to expression, isoform B is expressed almost exclusively in adult heads.

It catalyses the reaction GTP + H2O = 7,8-dihydroneopterin 3'-triphosphate + formate + H(+). Its pathway is cofactor biosynthesis; 7,8-dihydroneopterin triphosphate biosynthesis; 7,8-dihydroneopterin triphosphate from GTP: step 1/1. In terms of biological role, isoform B is required for eye pigment production, Isoform C may be required for normal embryonic development and segment pattern formation. This is GTP cyclohydrolase 1 (Pu) from Drosophila melanogaster (Fruit fly).